Consider the following 144-residue polypeptide: Large ribosomal subunit protein uL16 (144 aa).

This sequence belongs to the universal ribosomal protein uL16 family. As to quaternary structure, part of the 50S ribosomal subunit.

Functionally, binds 23S rRNA and is also seen to make contacts with the A and possibly P site tRNAs. This Thermoanaerobacter pseudethanolicus (strain ATCC 33223 / 39E) (Clostridium thermohydrosulfuricum) protein is Large ribosomal subunit protein uL16.